The chain runs to 259 residues: Global transcriptional regulator CodY (259 aa).

A GAF domain region spans residues 1–155 (MELLAKTRKL…SATVVGMEIL (155 aa)). Positions 203 to 222 (ASKIADRVGITRSVIVNALR) form a DNA-binding region, H-T-H motif. S215 is modified (phosphoserine).

This sequence belongs to the CodY family.

It localises to the cytoplasm. DNA-binding global transcriptional regulator which is involved in the adaptive response to starvation and acts by directly or indirectly controlling the expression of numerous genes in response to nutrient availability. During rapid exponential growth, CodY is highly active and represses genes whose products allow adaptation to nutrient depletion. This is Global transcriptional regulator CodY from Bacillus cytotoxicus (strain DSM 22905 / CIP 110041 / 391-98 / NVH 391-98).